A 145-amino-acid chain; its full sequence is Granulysin (145 aa).

Positions 1 to 22 are cleaved as a signal peptide; it reads MATWALLLLAAMLLGNPGLVFS. A Saposin B-type domain is found at 62 to 142; it reads LGRDYRTCLT…EDLRLCIPST (81 aa). Intrachain disulfides connect Cys69–Cys132 and Cys96–Cys107.

Post-translationally, a 9 kDa form is produced by proteolytic processing of a 15 kDa protein. As to expression, expressed in natural killer and T-cells.

The protein localises to the secreted. Its function is as follows. Antimicrobial protein that kills intracellular pathogens. Active against a broad range of microbes, including Gram-positive and Gram-negative bacteria, fungi, and parasites. Kills Mycobacterium tuberculosis. This Homo sapiens (Human) protein is Granulysin (GNLY).